We begin with the raw amino-acid sequence, 158 residues long: Low molecular weight phosphotyrosine protein phosphatase (158 aa).

Alanine 2 is subject to N-acetylalanine. Cysteine 13 acts as the Nucleophile in catalysis. The active site involves arginine 19. Aspartate 130 functions as the Proton donor in the catalytic mechanism. Tyrosine 132 and tyrosine 133 each carry phosphotyrosine.

Belongs to the low molecular weight phosphotyrosine protein phosphatase family. In terms of assembly, interacts with EPHA2; dephosphorylates EPHA2. Interacts with EPHB1. Interacts with the SH3 domain of SPTAN1. In terms of processing, phosphorylated by LCK. Phosphorylation at Tyr-132 increases its phosphatase activity.

The protein resides in the cytoplasm. It carries out the reaction O-phospho-L-tyrosyl-[protein] + H2O = L-tyrosyl-[protein] + phosphate. The catalysed reaction is a phosphate monoester + H2O = an alcohol + phosphate. Its activity is regulated as follows. Inhibited by sulfhydryl reagents. Functionally, acts on tyrosine phosphorylated proteins, low-MW aryl phosphates and natural and synthetic acyl phosphates with differences in substrate specificity between isoform 1 and isoform 2. This Sus scrofa (Pig) protein is Low molecular weight phosphotyrosine protein phosphatase (ACP1).